The following is a 3381-amino-acid chain: Versican core protein (3381 aa).

The first 20 residues, 1-20, serve as a signal peptide directing secretion; the sequence is MLINIKSILWMCSTLIAAHA. The Ig-like V-type domain occupies 21-147; sequence LQKVNMEKSP…EDTQDTVSLT (127 aa). Cystine bridges form between Cys44–Cys131, Cys173–Cys244, Cys197–Cys218, Cys271–Cys346, and Cys295–Cys316. A glycan (N-linked (GlcNAc...) asparagine) is linked at Asn57. 2 Link domains span residues 151-246 and 252-348; these read VVFH…YCYV and DVFH…YCFK. N-linked (GlcNAc...) asparagine glycans are attached at residues Asn331 and Asn352. The tract at residues 349-1336 is GAG-alpha (glucosaminoglycan attachment domain); sequence PKQNISEATT…IIEVRENKTG (988 aa). Positions 417 to 427 are enriched in polar residues; that stretch reads PLTSTHRSATE. Disordered regions lie at residues 417–437 and 603–623; these read PLTS…SMKK and ESVS…MDHR. Residue Ser660 is glycosylated (O-linked (Xyl...) (chondroitin sulfate) serine). Positions 816 to 866 are disordered; the sequence is DNTTSKPLGSTEHVGSPKLPPALITTTGVSGKDKEMPSLTEDGRDEFTRIP. The N-linked (GlcNAc...) asparagine glycan is linked to Asn817. Basic and acidic residues predominate over residues 846 to 863; that stretch reads GKDKEMPSLTEDGRDEFT. N-linked (GlcNAc...) asparagine glycans are attached at residues Asn965 and Asn1017. Residues 1043–1052 show a composition bias toward basic and acidic residues; that stretch reads EDFLWKEQTP. 2 disordered regions span residues 1043–1081 and 1218–1244; these read EDFL…SDGS and FSSA…PDEE. Asn1333 is a glycosylation site (N-linked (GlcNAc...) asparagine). The interval 1337–3074 is GAG-beta; sequence RMSDFSVSGH…VEGTAVYLPG (1738 aa). A disordered region spans residues 1338 to 1362; that stretch reads MSDFSVSGHPIDSESKEDEPCSEET. A compositionally biased stretch (acidic residues) spans 1352–1362; it reads SKEDEPCSEET. Asn1393 carries N-linked (GlcNAc...) asparagine glycosylation. The segment covering 1417 to 1428 has biased composition (basic and acidic residues); the sequence is KDPEAAEARRGQ. Disordered regions lie at residues 1417-1446, 1455-1474, and 1484-1512; these read KDPE…ESDS, GLPT…SLEI, and TAEP…GPDS. N-linked (GlcNAc...) asparagine glycosylation is found at Asn1437 and Asn1463. O-linked (Xyl...) (chondroitin sulfate) serine glycans are attached at residues Ser1539 and Ser1621. A glycan (N-linked (GlcNAc...) asparagine) is linked at Asn1653. A disordered region spans residues 1708–1785; that stretch reads PPLEETTRKE…ERETTSSTVV (78 aa). Residues 1712–1721 are compositionally biased toward basic and acidic residues; that stretch reads ETTRKEEEKG. Polar residues predominate over residues 1726 to 1738; sequence ASTVEVHSPTQRL. Low complexity predominate over residues 1743–1761; sequence SPSELESSSETPPDDSAAA. The span at 1764–1784 shows a compositional bias: polar residues; the sequence is KSFTSQMTPTQSERETTSSTV. Residues Ser1928 and Ser1952 are each glycosylated (O-linked (Xyl...) (chondroitin sulfate) serine). The segment covering 1964 to 1976 has biased composition (polar residues); that stretch reads PSVTPTSDLSNHT. 2 disordered regions span residues 1964–1986 and 2041–2126; these read PSVT…GSTL and EGAI…QSSV. Asn1974, Asn2045, Asn2074, and Asn2103 each carry an N-linked (GlcNAc...) asparagine glycan. Over residues 2065-2075 the composition is skewed to basic and acidic residues; sequence STEEGEVKENH. At Ser2109 the chain carries Phosphoserine. O-linked (Xyl...) (chondroitin sulfate) serine glycosylation is found at Ser2240 and Ser2247. Residues Asn2263, Asn2290, and Asn2356 are each glycosylated (N-linked (GlcNAc...) asparagine). 3 disordered regions span residues 2338–2388, 2490–2512, and 2594–2615; these read EGPF…AETK, EQRE…EKAT, and TDLD…TQVQ. 2 stretches are compositionally biased toward polar residues: residues 2345–2357 and 2367–2383; these read LTFS…PQNQ and TSRP…ENSV. 2 positions are modified to phosphoserine: Ser2607 and Ser2608. Position 2612 is a phosphothreonine (Thr2612). N-linked (GlcNAc...) asparagine glycans are attached at residues Asn2623 and Asn2641. Residues Ser2714, Ser2715, and Ser2759 are each glycosylated (O-linked (Xyl...) (chondroitin sulfate) serine). The disordered stretch occupies residues 2819-2893; sequence PPLSIHLGSG…EPSEDESKPK (75 aa). Over residues 2840-2851 the composition is skewed to polar residues; that stretch reads ALPSTDASTPPV. N-linked (GlcNAc...) asparagine glycans are attached at residues Asn2919 and Asn3052. Positions 3074–3110 constitute an EGF-like 1 domain; that stretch reads GPDRCKMNPCLNGGTCYPTETSYVCTCVPGYSGDRCE. Disulfide bonds link Cys3078/Cys3089, Cys3083/Cys3098, Cys3100/Cys3109, Cys3116/Cys3127, Cys3121/Cys3136, Cys3138/Cys3147, Cys3154/Cys3165, Cys3182/Cys3274, Cys3250/Cys3266, Cys3281/Cys3324, and Cys3310/Cys3337. Residues 3112 to 3148 enclose the EGF-like 2; calcium-binding domain; the sequence is DFDECHSNPCRNGATCIDGFNTFRCLCLPSYVGALCE. The C-type lectin domain maps to 3161–3275; the sequence is FQGQCYKYFA…CNYHLTYTCK (115 aa). A Sushi domain is found at 3279–3339; sequence VACGQPPVVE…WAMPKITCLN (61 aa). N-linked (GlcNAc...) asparagine glycans are attached at residues Asn3354 and Asn3364. A compositionally biased stretch (polar residues) spans 3355–3365; the sequence is SSSAKDNSINT. The interval 3355 to 3381 is disordered; that stretch reads SSSAKDNSINTSKHDHRWSRRWQESRR.

Belongs to the aggrecan/versican proteoglycan family. Interacts with FBLN1. Phosphorylated by FAM20C in the extracellular medium. Post-translationally, proteolytically cleaved by ADAMTS5 and ADAMTS15 in the pericellular matrix surrounding myoblasts, facilitating myoblast contact and fusion which is required for skeletal muscle development and regeneration. Cerebral white matter. Isoform V0 and isoform V1 are expressed in the central nervous system, and in a number of mesenchymal and epithelial tissues; the major isoform V2 is restricted to the central nervous system.

It localises to the secreted. The protein resides in the extracellular space. The protein localises to the extracellular matrix. It is found in the cell projection. Its subcellular location is the cilium. It localises to the photoreceptor outer segment. The protein resides in the interphotoreceptor matrix. Its function is as follows. May play a role in intercellular signaling and in connecting cells with the extracellular matrix. May take part in the regulation of cell motility, growth and differentiation. Binds hyaluronic acid. This is Versican core protein (VCAN) from Bos taurus (Bovine).